The sequence spans 220 residues: Ribonuclease HII (220 aa).

Residues 32 to 220 (KHIAGIDEAG…FAPIKGRFDC (189 aa)) enclose the RNase H type-2 domain. The a divalent metal cation site is built by Asp38, Glu39, and Asp130.

The protein belongs to the RNase HII family. Requires Mn(2+) as cofactor. Mg(2+) serves as cofactor.

It localises to the cytoplasm. It catalyses the reaction Endonucleolytic cleavage to 5'-phosphomonoester.. In terms of biological role, endonuclease that specifically degrades the RNA of RNA-DNA hybrids. This is Ribonuclease HII from Brucella canis (strain ATCC 23365 / NCTC 10854 / RM-666).